Here is a 209-residue protein sequence, read N- to C-terminus: Ribosomal RNA large subunit methyltransferase E (209 aa).

Positions 63, 65, 83, 99, and 124 each coordinate S-adenosyl-L-methionine. The Proton acceptor role is filled by K164.

Belongs to the class I-like SAM-binding methyltransferase superfamily. RNA methyltransferase RlmE family.

It localises to the cytoplasm. The enzyme catalyses uridine(2552) in 23S rRNA + S-adenosyl-L-methionine = 2'-O-methyluridine(2552) in 23S rRNA + S-adenosyl-L-homocysteine + H(+). Specifically methylates the uridine in position 2552 of 23S rRNA at the 2'-O position of the ribose in the fully assembled 50S ribosomal subunit. In Vibrio parahaemolyticus serotype O3:K6 (strain RIMD 2210633), this protein is Ribosomal RNA large subunit methyltransferase E.